The sequence spans 538 residues: MSSAKRVKLSHSKAPGPFRKPSSGDRAAAKVLTKKITQAPKAAAPIKQKAREAEEDDDDDDKDDKDEEDEEQNDDSSDEASENDDSTPTVEEATKEGQTELPSKEETPTKSFRDLGIVEPLCEACEALKFKKPTPIQEQAIPLALQGRDVIGIAETGSGKTAAFALPILQSLLEKPQPLFGLVLAPTRELAAQIGQTFEALGASISLRCAVVVGGLDMVSQSTALGKKPHIVVATPGRLLDHLEKTKGFSLRSLKFLVMDEADRLLDLDFGPILDKILKFLPRERRTFLFSATMSSKVESLQRASLRDPLKVSVSSSQEKTVSTLIQNPLFIPHKHKDVYLIYLANEFAGKTTIVFTRTVNEAQRVSILLRTLSFGAIPLHGQLSQSMRLGALNKFKARSRDILVATDVAARGLDIPEVDLVINFDMPQDSMTYIHRVGRTARAGRSGRAISIITQYDLELWLRIEKAALNGRKLPLFQPDKEEVMVFKERVEEAQRHAREEMKALHEDRGKKGAVLKGRKRGSATKRRHDDMDAEEG.

A compositionally biased stretch (basic residues) spans 1-11 (MSSAKRVKLSH). The disordered stretch occupies residues 1–112 (MSSAKRVKLS…SKEETPTKSF (112 aa)). Positions 34-47 (KKITQAPKAAAPIK) are enriched in low complexity. Over residues 53–85 (AEEDDDDDDKDDKDEEDEEQNDDSSDEASENDD) the composition is skewed to acidic residues. Positions 92-112 (EATKEGQTELPSKEETPTKSF) are enriched in basic and acidic residues. The short motif at 110–138 (KSFRDLGIVEPLCEACEALKFKKPTPIQE) is the Q motif element. The Helicase ATP-binding domain maps to 141-312 (IPLALQGRDV…RASLRDPLKV (172 aa)). 154-161 (AETGSGKT) is an ATP binding site. Positions 260 to 263 (DEAD) match the DEAD box motif. Residues 336–486 (HKDVYLIYLA…LFQPDKEEVM (151 aa)) enclose the Helicase C-terminal domain. The segment covering 498–512 (HAREEMKALHEDRGK) has biased composition (basic and acidic residues). The tract at residues 498-538 (HAREEMKALHEDRGKKGAVLKGRKRGSATKRRHDDMDAEEG) is disordered. A compositionally biased stretch (basic residues) spans 513–528 (KGAVLKGRKRGSATKR).

It belongs to the DEAD box helicase family. DDX47/RRP3 subfamily. In terms of assembly, interacts with the SSU processome.

Its subcellular location is the nucleus. The catalysed reaction is ATP + H2O = ADP + phosphate + H(+). ATP-dependent rRNA helicase required for pre-ribosomal RNA processing. Involved in the maturation of the 35S-pre-rRNA and to its cleavage to mature 18S rRNA. This Pyricularia oryzae (strain 70-15 / ATCC MYA-4617 / FGSC 8958) (Rice blast fungus) protein is ATP-dependent rRNA helicase RRP3.